The following is a 641-amino-acid chain: Phosphomethylpyrimidine synthase (641 aa).

Residues Asn221, Met250, Tyr279, His315, 335-337 (SRG), 376-379 (DGLR), and Glu415 contribute to the substrate site. His419 contributes to the Zn(2+) binding site. Tyr442 provides a ligand contact to substrate. Residue His483 participates in Zn(2+) binding. The [4Fe-4S] cluster site is built by Cys563, Cys566, and Cys571.

This sequence belongs to the ThiC family. In terms of assembly, homodimer. Requires [4Fe-4S] cluster as cofactor.

It carries out the reaction 5-amino-1-(5-phospho-beta-D-ribosyl)imidazole + S-adenosyl-L-methionine = 4-amino-2-methyl-5-(phosphooxymethyl)pyrimidine + CO + 5'-deoxyadenosine + formate + L-methionine + 3 H(+). It participates in cofactor biosynthesis; thiamine diphosphate biosynthesis. In terms of biological role, catalyzes the synthesis of the hydroxymethylpyrimidine phosphate (HMP-P) moiety of thiamine from aminoimidazole ribotide (AIR) in a radical S-adenosyl-L-methionine (SAM)-dependent reaction. The polypeptide is Phosphomethylpyrimidine synthase (Rhodopseudomonas palustris (strain TIE-1)).